Reading from the N-terminus, the 529-residue chain is Bifunctional purine biosynthesis protein PurH (529 aa).

Residues 1-148 enclose the MGS-like domain; sequence MQQRRPVRRA…KNHKDVAIVV (148 aa). Position 287 is an N6-acetyllysine (Lys-287).

It belongs to the PurH family.

It catalyses the reaction (6R)-10-formyltetrahydrofolate + 5-amino-1-(5-phospho-beta-D-ribosyl)imidazole-4-carboxamide = 5-formamido-1-(5-phospho-D-ribosyl)imidazole-4-carboxamide + (6S)-5,6,7,8-tetrahydrofolate. The catalysed reaction is IMP + H2O = 5-formamido-1-(5-phospho-D-ribosyl)imidazole-4-carboxamide. It participates in purine metabolism; IMP biosynthesis via de novo pathway; 5-formamido-1-(5-phospho-D-ribosyl)imidazole-4-carboxamide from 5-amino-1-(5-phospho-D-ribosyl)imidazole-4-carboxamide (10-formyl THF route): step 1/1. It functions in the pathway purine metabolism; IMP biosynthesis via de novo pathway; IMP from 5-formamido-1-(5-phospho-D-ribosyl)imidazole-4-carboxamide: step 1/1. This chain is Bifunctional purine biosynthesis protein PurH, found in Escherichia coli (strain SMS-3-5 / SECEC).